The primary structure comprises 715 residues: Targeting protein for Xklp2-B (715 aa).

Residues Asn-36–Leu-167 are disordered. Residues Leu-47 to Gln-56 are compositionally biased toward polar residues. A compositionally biased stretch (basic residues) spans Gln-85–Leu-103. Basic and acidic residues predominate over residues Lys-104 to Ala-115. Polar residues predominate over residues Gln-141–Pro-152. Position 204 is a phosphoserine; by plk1 (Ser-204). Disordered regions lie at residues Pro-260–Ser-291 and Arg-314–Lys-337.

Belongs to the TPX2 family. As to quaternary structure, associates with microtubules. Interacts with aurka and plk1. Interacts with kif15. Phosphorylated during mitosis. Hyperphosphorylated upon assembly of microtubules.

The protein localises to the nucleus. Its subcellular location is the cytoplasm. It is found in the cytoskeleton. The protein resides in the spindle. It localises to the spindle pole. In terms of biological role, spindle assembly factor. Required for normal assembly of mitotic spindles. Mediates the binding kif15 and aurka to spindle microtubules. Required for targeting kif15 to microtubule minus ends. Activates aurka by promoting its autophosphorylation and protects the phosphorylated residue against dephosphorylation. This chain is Targeting protein for Xklp2-B (tpx2-b), found in Xenopus laevis (African clawed frog).